Consider the following 319-residue polypeptide: MTQDYRVLLYYQYVPIEDGETFAQKHLADCKELGLKGRILVADEGINGTVSGTIEQTNAYMELMKNDPRFSSTIFKIDEAEQNAFKKMHVRYRPELVNLSLEDDVNPLELTGAYLDPKEFREAMLDENTVVIDARNDYEFDLGHFRGAIRPEIRSFRELPQWIRDNKEQFMEKRVLTYCTGGIRCEKFSGWLVREGFKDVGQLHGGIATYGKDPEVQGDLWDGQMYVFDSRIAVPINQKEHVIVGRDWFDGSPCERYINCGNPECNRQMLASEENEAKYLGACSHECRVHPNNRYIKAHQLSNQEVQERLALLEKDLAS.

A Rhodanese domain is found at 125–219 (LDENTVVIDA…YGKDPEVQGD (95 aa)). Cys-179 acts as the Cysteine persulfide intermediate in catalysis.

The protein belongs to the TrhO family.

The catalysed reaction is uridine(34) in tRNA + AH2 + O2 = 5-hydroxyuridine(34) in tRNA + A + H2O. In terms of biological role, catalyzes oxygen-dependent 5-hydroxyuridine (ho5U) modification at position 34 in tRNAs. This chain is tRNA uridine(34) hydroxylase, found in Lactococcus lactis subsp. lactis (strain IL1403) (Streptococcus lactis).